A 422-amino-acid chain; its full sequence is MRTLLRLKRLMPEVLWTKRSCSSSSINKSILKHLASKIIATGPISVAEYMREALTNPVLGYYVKNDMLGAGGDFITSPEISQIFGELLGVWCISEWMAAGKSSALQLVELGPGRGSLTSDILRVFSQLKGVLGETGISIHLVEVSPKLSQVQAECLTGNQTQTYDNNHTFYRSGTTCTGLPIYWYHSIEDVPRGFSIFLAHEFFDALPIHKFQRTENGWREVLVDIDPENPGKLRFVVSHRPTLASSTLIQKDESRRHVEVCAEAGVIVQKLASRIAEDGGAALIVDYGHDGTKTDTFRGFKGHQIHDVLEAPGLADLTADVDFSYLRKMAGDQVICLGPITQRSFLKNMGIDSRMQVLLSSNDPSIRAQLIHSYDMLINPEKMGERFQFFSVLNTARLAQREQMQKSTVMPVAGFTELEMQ.

The transit peptide at 1–28 (MRTLLRLKRLMPEVLWTKRSCSSSSINK) directs the protein to the mitochondrion.

Belongs to the NDUFAF7 family.

The protein localises to the mitochondrion. It catalyses the reaction L-arginyl-[protein] + 2 S-adenosyl-L-methionine = N(omega),N(omega)'-dimethyl-L-arginyl-[protein] + 2 S-adenosyl-L-homocysteine + 2 H(+). Its function is as follows. Arginine methyltransferase involved in the assembly or stability of mitochondrial NADH:ubiquinone oxidoreductase complex (complex I). Acts by mediating symmetric dimethylation of 'Arg-118' of ndufs2 after it assembles into the complex I, stabilizing the early intermediate complex. In Danio rerio (Zebrafish), this protein is Protein arginine methyltransferase NDUFAF7, mitochondrial.